The sequence spans 169 residues: Sorting nexin-24 (169 aa).

Met-1 bears the N-acetylmethionine mark. The region spanning 1–125 (MEVYIPSFRY…SFDETESEES (125 aa)) is the PX domain. The a 1,2-diacyl-sn-glycero-3-phospho-(1D-myo-inositol-3-phosphate) site is built by Arg-38, Ser-40, Lys-61, and Arg-74. Phosphoserine occurs at positions 113 and 116.

The protein belongs to the sorting nexin family.

It localises to the cytoplasmic vesicle membrane. Functionally, may be involved in several stages of intracellular trafficking. The chain is Sorting nexin-24 (SNX24) from Homo sapiens (Human).